The primary structure comprises 314 residues: Putative S-adenosyl-L-methionine-dependent methyltransferase MMAR_5323 (314 aa).

S-adenosyl-L-methionine-binding positions include aspartate 132 and 161-162; that span reads DL.

It belongs to the UPF0677 family.

In terms of biological role, exhibits S-adenosyl-L-methionine-dependent methyltransferase activity. The chain is Putative S-adenosyl-L-methionine-dependent methyltransferase MMAR_5323 from Mycobacterium marinum (strain ATCC BAA-535 / M).